Here is a 65-residue protein sequence, read N- to C-terminus: Orally active insecticidal peptide-3 (65 aa).

A signal peptide spans 1 to 21; it reads MKTSVLFAILGLALLFCLSFG. Residues 22-29 constitute a propeptide that is removed on maturation; the sequence is VELEETGR. Intrachain disulfides connect C31-C46, C38-C51, and C45-C58. The residue at position 62 (P62) is a Proline amide.

The protein belongs to the neurotoxin 10 (Hwtx-1) family. 46 (Jztx-7/10/12) subfamily. In terms of tissue distribution, expressed by the venom gland.

It localises to the secreted. Functionally, probable ion channel inhibitor. Shows insecticidal activity when injected into mealworms. This is Orally active insecticidal peptide-3 from Selenotypus plumipes (Australian featherleg tarantula).